Here is a 184-residue protein sequence, read N- to C-terminus: ATP synthase subunit b, chloroplastic (184 aa).

The helical transmembrane segment at 27–49 threads the bilayer; it reads LATNPINLSVVLGVLIFFGKGVL.

This sequence belongs to the ATPase B chain family. As to quaternary structure, F-type ATPases have 2 components, F(1) - the catalytic core - and F(0) - the membrane proton channel. F(1) has five subunits: alpha(3), beta(3), gamma(1), delta(1), epsilon(1). F(0) has four main subunits: a(1), b(1), b'(1) and c(10-14). The alpha and beta chains form an alternating ring which encloses part of the gamma chain. F(1) is attached to F(0) by a central stalk formed by the gamma and epsilon chains, while a peripheral stalk is formed by the delta, b and b' chains.

Its subcellular location is the plastid. The protein localises to the chloroplast thylakoid membrane. In terms of biological role, f(1)F(0) ATP synthase produces ATP from ADP in the presence of a proton or sodium gradient. F-type ATPases consist of two structural domains, F(1) containing the extramembraneous catalytic core and F(0) containing the membrane proton channel, linked together by a central stalk and a peripheral stalk. During catalysis, ATP synthesis in the catalytic domain of F(1) is coupled via a rotary mechanism of the central stalk subunits to proton translocation. Its function is as follows. Component of the F(0) channel, it forms part of the peripheral stalk, linking F(1) to F(0). This chain is ATP synthase subunit b, chloroplastic, found in Piper cenocladum (Ant piper).